Consider the following 256-residue polypeptide: UPF0246 protein TERTU_4575 (256 aa).

The protein belongs to the UPF0246 family.

The sequence is that of UPF0246 protein TERTU_4575 from Teredinibacter turnerae (strain ATCC 39867 / T7901).